A 206-amino-acid chain; its full sequence is 2,3-bisphosphoglycerate-dependent phosphoglycerate mutase (206 aa).

Substrate contacts are provided by residues 9–16 (RHGQSEWN), 22–23 (TG), arginine 61, 88–91 (ERDY), lysine 99, 115–116 (RR), and 159–160 (GN). The active-site Tele-phosphohistidine intermediate is the histidine 10. The active-site Proton donor/acceptor is the glutamate 88.

The protein belongs to the phosphoglycerate mutase family. BPG-dependent PGAM subfamily. In terms of assembly, homodimer.

The enzyme catalyses (2R)-2-phosphoglycerate = (2R)-3-phosphoglycerate. The protein operates within carbohydrate degradation; glycolysis; pyruvate from D-glyceraldehyde 3-phosphate: step 3/5. In terms of biological role, catalyzes the interconversion of 2-phosphoglycerate and 3-phosphoglycerate. The protein is 2,3-bisphosphoglycerate-dependent phosphoglycerate mutase of Bartonella bacilliformis (strain ATCC 35685 / KC583 / Herrer 020/F12,63).